A 153-amino-acid polypeptide reads, in one-letter code: UPF0756 membrane protein NT01CX_1209 (153 aa).

The next 4 membrane-spanning stretches (helical) occupy residues 5 to 25 (IILLILMFLSFISKNKSLGIA), 45 to 65 (ENHFMNLGMTFLMIWMLIPII), 83 to 103 (IVCFLCGAIVAVLASKGVGFL), and 113 to 133 (IILGSIVGVSLLGGVPVGPLI).

It belongs to the UPF0756 family.

The protein resides in the cell membrane. This chain is UPF0756 membrane protein NT01CX_1209, found in Clostridium novyi (strain NT).